The primary structure comprises 200 residues: Small ribosomal subunit protein uS4 (200 aa).

An S4 RNA-binding domain is found at 92 to 155; it reads SRLDAVVYQL…QKLNIIAESV (64 aa).

The protein belongs to the universal ribosomal protein uS4 family. In terms of assembly, part of the 30S ribosomal subunit. Contacts protein S5. The interaction surface between S4 and S5 is involved in control of translational fidelity.

In terms of biological role, one of the primary rRNA binding proteins, it binds directly to 16S rRNA where it nucleates assembly of the body of the 30S subunit. Its function is as follows. With S5 and S12 plays an important role in translational accuracy. The sequence is that of Small ribosomal subunit protein uS4 from Macrococcus caseolyticus (strain JCSC5402) (Macrococcoides caseolyticum).